The sequence spans 394 residues: Elongation factor Tu (394 aa).

The region spanning K10–E204 is the tr-type G domain. The G1 stretch occupies residues G19–T26. Residue G19–T26 participates in GTP binding. Position 26 (T26) interacts with Mg(2+). Residues G60–N64 are G2. Residues D81–G84 form a G3 region. Residues D81–H85 and N136–D139 contribute to the GTP site. The segment at N136–D139 is G4. A G5 region spans residues S174 to L176.

Belongs to the TRAFAC class translation factor GTPase superfamily. Classic translation factor GTPase family. EF-Tu/EF-1A subfamily. Monomer.

The protein localises to the cytoplasm. It carries out the reaction GTP + H2O = GDP + phosphate + H(+). In terms of biological role, GTP hydrolase that promotes the GTP-dependent binding of aminoacyl-tRNA to the A-site of ribosomes during protein biosynthesis. This is Elongation factor Tu from Ureaplasma parvum serovar 3 (strain ATCC 27815 / 27 / NCTC 11736).